The chain runs to 353 residues: Ferrochelatase (353 aa).

His223 and Glu304 together coordinate Fe cation.

It belongs to the ferrochelatase family.

It is found in the cytoplasm. It catalyses the reaction heme b + 2 H(+) = protoporphyrin IX + Fe(2+). Its pathway is porphyrin-containing compound metabolism; protoheme biosynthesis; protoheme from protoporphyrin-IX: step 1/1. Its function is as follows. Catalyzes the ferrous insertion into protoporphyrin IX. The polypeptide is Ferrochelatase (Mesorhizobium japonicum (strain LMG 29417 / CECT 9101 / MAFF 303099) (Mesorhizobium loti (strain MAFF 303099))).